The sequence spans 360 residues: Phospho-N-acetylmuramoyl-pentapeptide-transferase (360 aa).

10 helical membrane passes run 27–47, 73–93, 97–117, 145–165, 168–188, 199–219, 236–256, 263–283, 288–308, and 337–357; these read ILGVLTALAISLLVGNKVIVL, TMGGALIIFSISVSTLLWGDL, YVWVVLLVMLAFGVVGWVDDY, AFYLYYTASTPAETALIVPLF, VAIPLGMFFIVLTYFVIVGTS, GLAILPTVLVGGALGVFAYLT, SGELLVFCAALAGAGLGFLWF, IFMGDVGSLALGAALGTIAVI, LVLFIMGGVFVMETVSVILQV, and KVIVRFWIITVCLVLVGFATL.

The protein belongs to the glycosyltransferase 4 family. MraY subfamily. Mg(2+) serves as cofactor.

The protein localises to the cell inner membrane. It carries out the reaction UDP-N-acetyl-alpha-D-muramoyl-L-alanyl-gamma-D-glutamyl-meso-2,6-diaminopimeloyl-D-alanyl-D-alanine + di-trans,octa-cis-undecaprenyl phosphate = di-trans,octa-cis-undecaprenyl diphospho-N-acetyl-alpha-D-muramoyl-L-alanyl-D-glutamyl-meso-2,6-diaminopimeloyl-D-alanyl-D-alanine + UMP. It participates in cell wall biogenesis; peptidoglycan biosynthesis. Its function is as follows. Catalyzes the initial step of the lipid cycle reactions in the biosynthesis of the cell wall peptidoglycan: transfers peptidoglycan precursor phospho-MurNAc-pentapeptide from UDP-MurNAc-pentapeptide onto the lipid carrier undecaprenyl phosphate, yielding undecaprenyl-pyrophosphoryl-MurNAc-pentapeptide, known as lipid I. This chain is Phospho-N-acetylmuramoyl-pentapeptide-transferase, found in Marinomonas sp. (strain MWYL1).